We begin with the raw amino-acid sequence, 144 residues long: Large-conductance mechanosensitive channel (144 aa).

The next 2 membrane-spanning stretches (helical) occupy residues 21-41 (VGII…ANVI) and 76-96 (GIFL…FCII). The disordered stretch occupies residues 105-144 (QRGGKTRRAVQTECGRDAAYRDPRSLETTKQRHGAGYNDD). Residues 118–134 (CGRDAAYRDPRSLETTK) show a composition bias toward basic and acidic residues.

The protein belongs to the MscL family. As to quaternary structure, homopentamer.

It localises to the cell inner membrane. Its function is as follows. Channel that opens in response to stretch forces in the membrane lipid bilayer. May participate in the regulation of osmotic pressure changes within the cell. The chain is Large-conductance mechanosensitive channel from Sodalis glossinidius (strain morsitans).